A 592-amino-acid chain; its full sequence is MLALLLTTTIVSGDNQIELTEQLPTVMVAVLVRNKAHTLPYFFSYLEDLDYPKDRMSLWIRSDHNEDRSIEITKAWLKRTSSLYHSVDFKYRSERGKRESEKTSTHWNEERFSDVIRLKQDALQAARMMWADYIFFIDADVFLTNSNTLGKLIERKLPIVAPMLVSDGLYSNFWCGMTSDYYYQRTDDYKKILNYDQIGQWPVPMVHTAVLVSLNIAQTRQLTFERKNLPVGRYDGPVDDIIIFAMSANYSGIPMYVCNELLYGYIMVPLEAGETVPGKDLEQLTNVLSYIVNEYGALSLKQDLSRFVADVPKDKLSLSHIYMINLERRTERRTKMLKHFDLLGLDVEHFPAVDGKQLSDKKVYDMGIRFLPGYADPFHKRPMTMGEIGCFLSHYNIWERMVRLNQQEVLVLEDDIRFEPFFRRRAYGVLADARRIGGWDLIYFGRKRLQEEDEKWIDGSEYLVKAGYSYWTLGYVITLEGAKKLLREQPLSKLLPVDEYLPIMFDNHPNESWTSHFRDRTLSAWSAAPLLLYPTHYTGDEGYISDTEDSLRIQEPKKGDKEQLPNAPALLSESGIGQGEHDLETKNRRSEL.

The first 13 residues, 1–13 (MLALLLTTTIVSG), serve as a signal peptide directing secretion. Residues Asn249 and Asn510 are each glycosylated (N-linked (GlcNAc...) asparagine). 2 stretches are compositionally biased toward basic and acidic residues: residues 552-563 (RIQEPKKGDKEQ) and 579-592 (GEHDLETKNRRSEL). The tract at residues 552-592 (RIQEPKKGDKEQLPNAPALLSESGIGQGEHDLETKNRRSEL) is disordered. Residues 589–592 (RSEL) carry the Prevents secretion from ER motif.

It belongs to the glycosyltransferase 25 family.

Its subcellular location is the endoplasmic reticulum lumen. The protein is Glycosyltransferase 25 family member of Anopheles gambiae (African malaria mosquito).